The chain runs to 464 residues: 3-deoxy-D-manno-octulosonic acid transferase (464 aa).

The chain crosses the membrane as a helical; Signal-anchor span at residues 2–22 (MLLYYALSFILLPVYFIIILI). In terms of domain architecture, RPE1 insert spans 47 to 93 (DSLDFMQTSANKEEFKGDTSLRTTTYTLIREDEGLGSTYKLPLEASD). Glu-107 functions as the Proton acceptor in the catalytic mechanism. CMP contacts are provided by residues 311–312 (PR), 352–354 (FGE), and 377–380 (NILE).

This sequence belongs to the glycosyltransferase group 1 family. Glycosyltransferase 30 subfamily.

The protein resides in the cell inner membrane. It catalyses the reaction lipid IVA (E. coli) + CMP-3-deoxy-beta-D-manno-octulosonate = alpha-Kdo-(2-&gt;6)-lipid IVA (E. coli) + CMP + H(+). It functions in the pathway bacterial outer membrane biogenesis; LPS core biosynthesis. Involved in lipopolysaccharide (LPS) biosynthesis. Catalyzes the transfer of 3-deoxy-D-manno-octulosonate (Kdo) residue(s) from CMP-Kdo to lipid IV(A), the tetraacyldisaccharide-1,4'-bisphosphate precursor of lipid A. The chain is 3-deoxy-D-manno-octulosonic acid transferase (waaA) from Rickettsia conorii (strain ATCC VR-613 / Malish 7).